We begin with the raw amino-acid sequence, 556 residues long: Membrane protein insertase YidC (556 aa).

5 helical membrane-spanning segments follow: residues Ile6 to Asp26, Leu332 to Met352, Val358 to Tyr378, Leu428 to Leu448, and Val501 to Val521.

Belongs to the OXA1/ALB3/YidC family. Type 1 subfamily. As to quaternary structure, interacts with the Sec translocase complex via SecD. Specifically interacts with transmembrane segments of nascent integral membrane proteins during membrane integration.

The protein localises to the cell inner membrane. In terms of biological role, required for the insertion and/or proper folding and/or complex formation of integral membrane proteins into the membrane. Involved in integration of membrane proteins that insert both dependently and independently of the Sec translocase complex, as well as at least some lipoproteins. Aids folding of multispanning membrane proteins. This Legionella pneumophila (strain Paris) protein is Membrane protein insertase YidC.